Here is a 434-residue protein sequence, read N- to C-terminus: Epimerase FSL3 (434 aa).

125 to 126 (GF) lines the substrate pocket. Glu-392 serves as the catalytic Proton acceptor.

Belongs to the aldose epimerase family. Monomer.

Its pathway is secondary metabolite biosynthesis. In terms of biological role, epimerase; part of the gene cluster that mediates the biosynthesis of fusarielins F, G and H, decaketide compounds with 5 methylations and a decaline core that act as mycoestrogens as they stimulate growth of MCF-7 breast cancer cells. The initial compound in the pathway is produced by the reducing polyketide synthase FSL1. FSL1 lacks an active enoyl reductase (ER) domain and biosynthesis of fusarielins relies on the trans-acting enoyl reductase FSL5, before it is released through hydrolysis catalyzed by the thioesterase FSL2. Fusarielins F, G, and H have a C11=C12 cis double bond and is fully reduced between C10 and C11 and between C12 and C13. FSL3 can be involved in the formation of the C11=C12 cis double bond by moving a hypothetical C10=C11 or C12=C13 trans double bond to form prefusarielin. Prefusarielin is oxygenated at C15 and C16 by the cytochrome P450 monooxygenase FSL4, resulting in fusarielin F, which subsequently is epoxidized into fusarielin G by the same enzyme. The final step in the pathway is a reduction of the carboxylic acid moiety to yield fusarielin H via a still undetermined mechanism. This chain is Epimerase FSL3, found in Gibberella zeae (strain ATCC MYA-4620 / CBS 123657 / FGSC 9075 / NRRL 31084 / PH-1) (Wheat head blight fungus).